The primary structure comprises 382 residues: Apolipoprotein A-IV (382 aa).

The N-terminal stretch at 1-20 (MFLKAVVLTLSLVAVTGAQA) is a signal peptide. A run of 13 repeats spans residues 33–54 (DYFSQLSNNAKEAVEHLQKSEL), 60–81 (ALFQDKIGQVNTYTDNLQKKLV), 82–103 (SFAMELHERLRKDSEKLKEEIR), 115–136 (PHADEVSRKIGDNMHELQQRLG), 137–158 (PYAEELRTQVNTHAEHLRNQLT), 159–180 (AHAQRMETTLRQNVGNLQASLT), 181–202 (PYADELKAKIDQNVEELKGHLT), 203–224 (PYADELKVKIDQNVEDLRRSLA), 225–246 (PYAQDVQEKLNHQLEGLAFQMK), 247–268 (KNAEELKAKISANADELRQKLV), 269–286 (PVAEVVRGKLRDNTEELQ), 287–308 (KSLAELSSHLDRQVEEFRRNMG), and 309–330 (PYGETFNKALLQQVEELRQKLG). A 13 X 22 AA approximate tandem repeats region spans residues 33–330 (DYFSQLSNNA…QVEELRQKLG (298 aa)).

This sequence belongs to the apolipoprotein A1/A4/E family. In terms of assembly, homodimer. Phosphorylation sites are present in the extracellular medium.

Its subcellular location is the secreted. Functionally, may have a role in chylomicrons and VLDL secretion and catabolism. Required for efficient activation of lipoprotein lipase by ApoC-II; potent activator of LCAT. Apoa-IV is a major component of HDL and chylomicrons. This is Apolipoprotein A-IV (APOA4) from Mirounga angustirostris (Northern elephant seal).